A 441-amino-acid polypeptide reads, in one-letter code: Serine hydroxymethyltransferase (441 aa).

124–126 (GHI) contacts (6S)-5,6,7,8-tetrahydrofolate. K239 carries the N6-(pyridoxal phosphate)lysine modification.

This sequence belongs to the SHMT family. In terms of assembly, homodimer. Pyridoxal 5'-phosphate serves as cofactor.

The protein resides in the cytoplasm. It functions in the pathway amino-acid biosynthesis; glycine biosynthesis; glycine from L-serine: step 1/1. Catalyzes the reversible interconversion of serine and glycine with a modified folate serving as the one-carbon carrier. Also exhibits a pteridine-independent aldolase activity toward beta-hydroxyamino acids, producing glycine and aldehydes, via a retro-aldol mechanism. The sequence is that of Serine hydroxymethyltransferase from Cenarchaeum symbiosum (strain A).